The primary structure comprises 342 residues: N-acetyl-gamma-glutamyl-phosphate reductase (342 aa).

The active site involves cysteine 149.

This sequence belongs to the NAGSA dehydrogenase family. Type 1 subfamily.

The protein localises to the cytoplasm. The catalysed reaction is N-acetyl-L-glutamate 5-semialdehyde + phosphate + NADP(+) = N-acetyl-L-glutamyl 5-phosphate + NADPH + H(+). The protein operates within amino-acid biosynthesis; L-arginine biosynthesis; N(2)-acetyl-L-ornithine from L-glutamate: step 3/4. In terms of biological role, catalyzes the NADPH-dependent reduction of N-acetyl-5-glutamyl phosphate to yield N-acetyl-L-glutamate 5-semialdehyde. This chain is N-acetyl-gamma-glutamyl-phosphate reductase, found in Nitrosospira multiformis (strain ATCC 25196 / NCIMB 11849 / C 71).